Here is a 186-residue protein sequence, read N- to C-terminus: Negative modulator of initiation of replication (186 aa).

This sequence belongs to the SeqA family. Homodimer. Polymerizes to form helical filaments.

The protein resides in the cytoplasm. Negative regulator of replication initiation, which contributes to regulation of DNA replication and ensures that replication initiation occurs exactly once per chromosome per cell cycle. Binds to pairs of hemimethylated GATC sequences in the oriC region, thus preventing assembly of replication proteins and re-initiation at newly replicated origins. Repression is relieved when the region becomes fully methylated. This is Negative modulator of initiation of replication from Haemophilus ducreyi (strain 35000HP / ATCC 700724).